The chain runs to 686 residues: Translation initiation factor IF-2 (686 aa).

Residues 54–105 (KPSVADEFEVEEKVVRSKKNSNKKKKKGKGNEDKRQENFAGRQQTQTVETPD) are disordered. Over residues 69 to 81 (RSKKNSNKKKKKG) the composition is skewed to basic residues. The tr-type G domain occupies 188-357 (ERPAVVTIMG…LLVSEVEEYK (170 aa)). The G1 stretch occupies residues 197–204 (GHVDHGKT). 197–204 (GHVDHGKT) is a binding site for GTP. Residues 222–226 (GITQH) are G2. Residues 243 to 246 (DTPG) form a G3 region. GTP is bound by residues 243–247 (DTPGH) and 297–300 (NKMD). Positions 297-300 (NKMD) are G4. A G5 region spans residues 333 to 335 (SAI).

It belongs to the TRAFAC class translation factor GTPase superfamily. Classic translation factor GTPase family. IF-2 subfamily.

The protein localises to the cytoplasm. One of the essential components for the initiation of protein synthesis. Protects formylmethionyl-tRNA from spontaneous hydrolysis and promotes its binding to the 30S ribosomal subunits. Also involved in the hydrolysis of GTP during the formation of the 70S ribosomal complex. This chain is Translation initiation factor IF-2, found in Bacillus cereus (strain 03BB102).